The following is a 284-amino-acid chain: Phosphatidylglycerol--prolipoprotein diacylglyceryl transferase (284 aa).

7 helical membrane-spanning segments follow: residues 19–39 (ISFY…MWFL), 60–80 (LLYL…VLFY), 98–118 (GGMS…WFSY), 130–150 (FIVP…FING), 199–219 (QLYE…IFSC), 225–245 (GSIS…IEFF), and 258–278 (FITL…IIMY). Arg-143 serves as a coordination point for a 1,2-diacyl-sn-glycero-3-phospho-(1'-sn-glycerol).

The protein belongs to the Lgt family.

The protein localises to the cell inner membrane. It carries out the reaction L-cysteinyl-[prolipoprotein] + a 1,2-diacyl-sn-glycero-3-phospho-(1'-sn-glycerol) = an S-1,2-diacyl-sn-glyceryl-L-cysteinyl-[prolipoprotein] + sn-glycerol 1-phosphate + H(+). Its pathway is protein modification; lipoprotein biosynthesis (diacylglyceryl transfer). In terms of biological role, catalyzes the transfer of the diacylglyceryl group from phosphatidylglycerol to the sulfhydryl group of the N-terminal cysteine of a prolipoprotein, the first step in the formation of mature lipoproteins. The chain is Phosphatidylglycerol--prolipoprotein diacylglyceryl transferase from Blochmanniella floridana.